Reading from the N-terminus, the 282-residue chain is MANQLILLKKDFFTDEQQAVTVADRYPQDVFAEHTHEFCELVMVWRGNGLHVLNERPYRITRGDLFYIRAEDKHSYTSVNDLVLQNIIYCPERLKLNVNWQAMIPGFQGAQWHPHWRLGSMGMNQARQVINQLEHESNGRDPLANEMAELLFGQLVMTLKRHRYATDDLPATSRETLLDKLITALANSLESSFALDAFCQQEQCSERVLRQQFRAQTGMTINQYLRQVRICHAQYLLQHSPLMISEISMQCGFEDSNYFSVVFTRETGMTPSQWRHLSNQSD.

The 99-residue stretch at 179 to 277 (DKLITALANS…GMTPSQWRHL (99 aa)) folds into the HTH araC/xylS-type domain. 2 consecutive DNA-binding regions (H-T-H motif) follow at residues 196–217 (DAFC…RAQT) and 244–267 (ISEI…TRET).

In terms of assembly, binds DNA as a dimer.

It is found in the cytoplasm. In terms of biological role, activates expression of the rhaSR operon in response to L-rhamnose. The sequence is that of HTH-type transcriptional activator RhaR from Salmonella dublin (strain CT_02021853).